The sequence spans 182 residues: Orotate phosphoribosyltransferase (182 aa).

5-phospho-alpha-D-ribose 1-diphosphate-binding positions include Arg91, Lys92, Lys95, His97, and 117-125; that span reads EDVTTTGGS. Positions 121 and 149 each coordinate orotate.

This sequence belongs to the purine/pyrimidine phosphoribosyltransferase family. PyrE subfamily. As to quaternary structure, homodimer. It depends on Mg(2+) as a cofactor.

The enzyme catalyses orotidine 5'-phosphate + diphosphate = orotate + 5-phospho-alpha-D-ribose 1-diphosphate. It functions in the pathway pyrimidine metabolism; UMP biosynthesis via de novo pathway; UMP from orotate: step 1/2. In terms of biological role, catalyzes the transfer of a ribosyl phosphate group from 5-phosphoribose 1-diphosphate to orotate, leading to the formation of orotidine monophosphate (OMP). The chain is Orotate phosphoribosyltransferase from Pyrococcus abyssi (strain GE5 / Orsay).